A 352-amino-acid chain; its full sequence is Probable protein phosphatase 2C 42 (352 aa).

Positions 26 to 321 constitute a PPM-type phosphatase domain; it reads AYASSAMQGY…DNMSVILVRF (296 aa). Mn(2+) is bound by residues aspartate 62, glycine 63, aspartate 267, and aspartate 312. Positions 328 to 352 are disordered; that stretch reads RGARAATSSTSTGTVPSRHSKSISL. Positions 329-341 are enriched in low complexity; the sequence is GARAATSSTSTGT.

Belongs to the PP2C family. Mg(2+) serves as cofactor. The cofactor is Mn(2+).

It catalyses the reaction O-phospho-L-seryl-[protein] + H2O = L-seryl-[protein] + phosphate. It carries out the reaction O-phospho-L-threonyl-[protein] + H2O = L-threonyl-[protein] + phosphate. This Oryza sativa subsp. japonica (Rice) protein is Probable protein phosphatase 2C 42.